Here is a 345-residue protein sequence, read N- to C-terminus: Ferrochelatase (345 aa).

2 residues coordinate Fe cation: His215 and Glu296.

Belongs to the ferrochelatase family.

Its subcellular location is the cytoplasm. It catalyses the reaction heme b + 2 H(+) = protoporphyrin IX + Fe(2+). It functions in the pathway porphyrin-containing compound metabolism; protoheme biosynthesis; protoheme from protoporphyrin-IX: step 1/1. Functionally, catalyzes the ferrous insertion into protoporphyrin IX. Essential for normal nodule development. This Bradyrhizobium diazoefficiens (strain JCM 10833 / BCRC 13528 / IAM 13628 / NBRC 14792 / USDA 110) protein is Ferrochelatase.